The sequence spans 464 residues: Asparagine--tRNA ligase (464 aa).

Belongs to the class-II aminoacyl-tRNA synthetase family. As to quaternary structure, homodimer.

It localises to the cytoplasm. It catalyses the reaction tRNA(Asn) + L-asparagine + ATP = L-asparaginyl-tRNA(Asn) + AMP + diphosphate + H(+). The chain is Asparagine--tRNA ligase from Azobacteroides pseudotrichonymphae genomovar. CFP2.